The chain runs to 494 residues: Cytochrome P450 71D94 (494 aa).

Residues 1–21 (MELNLLLVIIILVATYTVSLL) form a helical; Signal-anchor for type II membrane protein membrane-spanning segment. Residue cysteine 434 participates in heme binding.

Belongs to the cytochrome P450 family. It depends on heme as a cofactor.

Its subcellular location is the endoplasmic reticulum membrane. Functionally, cytochrome P450 oxygenase of undefined substrate. Not active with limonene, (+)- or (-)-piperitone, (-)-isopiperitone, piperitenone or (+)-pulegone. The chain is Cytochrome P450 71D94 (CYP71D94) from Mentha gracilis (Gingermint).